A 389-amino-acid polypeptide reads, in one-letter code: MSEYLFTSESVSEGHPDKVADQISDAILDAILTQDKHARVAAETLVNTGLVVLAGEITTHANVDYIHVARETIKRIGYNTSDLGFDAKGCAVLVGYDKQSPDIAQGVNEGQGIDLNQGAGDQGLMFGYACDETPTLMPFPIYYAHRLVQRQAELRKDGRLPWLRPDAKSQITCAYDSETGLPKRIDTVVLSTQHSPDISHDMLTEAVIEDIVKPVLPAHMLTAETKFLINPTGRFVIGGPMGDCGLTGRKIIVDTYGGAAPHGGGAFSGKDPSKVDRSAAYAGRYVAKNIVAAGLARQCQIQVSYAIGIAEPTSISVDTFGTNAIPNEKIVELVKRHFDLRPKGIIQMLDLLRPIYTKTAAYGHFGREEPEFTWEATDKAAALRADAGL.

His15 contributes to the ATP binding site. Residue Asp17 participates in Mg(2+) binding. Glu43 contributes to the K(+) binding site. 2 residues coordinate L-methionine: Glu56 and Gln99. A flexible loop region spans residues 99–109 (QSPDIAQGVNE). ATP is bound by residues 166–168 (DAK), 234–235 (RF), Asp243, 249–250 (RK), Ala266, and Lys270. Asp243 is a binding site for L-methionine. Lys274 provides a ligand contact to L-methionine.

It belongs to the AdoMet synthase family. In terms of assembly, homotetramer; dimer of dimers. The cofactor is Mg(2+). K(+) is required as a cofactor.

The protein localises to the cytoplasm. The catalysed reaction is L-methionine + ATP + H2O = S-adenosyl-L-methionine + phosphate + diphosphate. The protein operates within amino-acid biosynthesis; S-adenosyl-L-methionine biosynthesis; S-adenosyl-L-methionine from L-methionine: step 1/1. Its function is as follows. Catalyzes the formation of S-adenosylmethionine (AdoMet) from methionine and ATP. The overall synthetic reaction is composed of two sequential steps, AdoMet formation and the subsequent tripolyphosphate hydrolysis which occurs prior to release of AdoMet from the enzyme. The protein is S-adenosylmethionine synthase of Laribacter hongkongensis (strain HLHK9).